The following is a 381-amino-acid chain: 1-deoxy-D-xylulose 5-phosphate reductoisomerase (381 aa).

NADPH-binding residues include Thr10, Gly11, Ser12, Ile13, and Asn120. Lys121 contributes to the 1-deoxy-D-xylulose 5-phosphate binding site. Glu122 serves as a coordination point for NADPH. Asp146 serves as a coordination point for Mn(2+). The 1-deoxy-D-xylulose 5-phosphate site is built by Ser147, Glu148, Ser172, and His195. Mn(2+) is bound at residue Glu148. Position 201 (Gly201) interacts with NADPH. Residues Ser208, Asn213, Lys214, and Glu217 each coordinate 1-deoxy-D-xylulose 5-phosphate. Mn(2+) is bound at residue Glu217.

The protein belongs to the DXR family. The cofactor is Mg(2+). Mn(2+) is required as a cofactor.

It carries out the reaction 2-C-methyl-D-erythritol 4-phosphate + NADP(+) = 1-deoxy-D-xylulose 5-phosphate + NADPH + H(+). It functions in the pathway isoprenoid biosynthesis; isopentenyl diphosphate biosynthesis via DXP pathway; isopentenyl diphosphate from 1-deoxy-D-xylulose 5-phosphate: step 1/6. In terms of biological role, catalyzes the NADPH-dependent rearrangement and reduction of 1-deoxy-D-xylulose-5-phosphate (DXP) to 2-C-methyl-D-erythritol 4-phosphate (MEP). The protein is 1-deoxy-D-xylulose 5-phosphate reductoisomerase of Thermodesulfovibrio yellowstonii (strain ATCC 51303 / DSM 11347 / YP87).